Consider the following 368-residue polypeptide: Branched-chain-amino-acid aminotransferase (368 aa).

Residue arginine 101 participates in pyridoxal 5'-phosphate binding. Lysine 204 carries the post-translational modification N6-(pyridoxal phosphate)lysine. Pyridoxal 5'-phosphate contacts are provided by residues tyrosine 209, 271 to 272 (IT), and threonine 314.

The protein belongs to the class-IV pyridoxal-phosphate-dependent aminotransferase family. Homodimer. Pyridoxal 5'-phosphate is required as a cofactor.

The enzyme catalyses L-leucine + 2-oxoglutarate = 4-methyl-2-oxopentanoate + L-glutamate. The catalysed reaction is L-isoleucine + 2-oxoglutarate = (S)-3-methyl-2-oxopentanoate + L-glutamate. It catalyses the reaction L-valine + 2-oxoglutarate = 3-methyl-2-oxobutanoate + L-glutamate. It participates in amino-acid biosynthesis; L-isoleucine biosynthesis; L-isoleucine from 2-oxobutanoate: step 4/4. The protein operates within amino-acid biosynthesis; L-leucine biosynthesis; L-leucine from 3-methyl-2-oxobutanoate: step 4/4. It functions in the pathway amino-acid biosynthesis; L-valine biosynthesis; L-valine from pyruvate: step 4/4. In terms of biological role, catalyzes the reversible transfers of an amino group from glutamate to the alpha-ketoacid of the respective amino acid in the final step in the biosynthesis of branchedchain amino acids. This is Branched-chain-amino-acid aminotransferase (ilvE) from Mycobacterium tuberculosis (strain CDC 1551 / Oshkosh).